The chain runs to 540 residues: Solute carrier family 22 member 7 (540 aa).

Helical transmembrane passes span leucine 21–methionine 41, valine 144–serine 164, leucine 172–asparagine 192, leucine 202–leucine 222, valine 232–isoleucine 252, tryptophan 257–proline 277, valine 344–leucine 364, leucine 378–valine 398, leucine 402–serine 422, isoleucine 429–leucine 449, threonine 462–leucine 484, and tryptophan 488–leucine 510.

This sequence belongs to the major facilitator (TC 2.A.1) superfamily. Organic cation transporter (TC 2.A.1.19) family. Abundant expression in male and female kidney. In kidney, expressed at the brush border of the proximal tubule S3 segment (S3) in the outer stripe and medullary rays. In kidney, expression is higher in female than male. Also expressed in female liver.

It localises to the basolateral cell membrane. It is found in the apical cell membrane. Its subcellular location is the cell membrane. It carries out the reaction orotate(out) + L-glutamate(in) = orotate(in) + L-glutamate(out). The enzyme catalyses 3',5'-cyclic GMP(in) = 3',5'-cyclic GMP(out). The catalysed reaction is GMP(in) = GMP(out). It catalyses the reaction 2'-deoxyguanosine(in) = 2'-deoxyguanosine(out). It carries out the reaction GDP(in) = GDP(out). The enzyme catalyses guanosine(in) = guanosine(out). The catalysed reaction is GTP(in) = GTP(out). It catalyses the reaction 3',5'-cyclic AMP(in) = 3',5'-cyclic AMP(out). It carries out the reaction creatinine(in) = creatinine(out). The enzyme catalyses prostaglandin E2(out) = prostaglandin E2(in). The catalysed reaction is 2-oxoglutarate(in) = 2-oxoglutarate(out). It catalyses the reaction glutarate(in) = glutarate(out). It carries out the reaction urate(out) = urate(in). The enzyme catalyses estrone 3-sulfate(out) = estrone 3-sulfate(in). In terms of biological role, functions as a Na(+)-independent bidirectional multispecific transporter. Contributes to the renal and hepatic elimination of endogenous organic compounds from the systemic circulation into the urine and bile, respectively. Capable of transporting a wide range of purine and pyrimidine nucleobases, nucleosides, and nucleotides with cGMP, 2'deoxyguanosine and GMP being the preferred substrates. Functions as a pH- and chloride-independent cGMP bidirectional facilitative transporter that can regulate both intracellular and extracellular levels of cGMP and may be involved in cGMP signaling pathways. Mediates orotate/glutamate bidirectional exchange and most likely display a physiological role in hepatic release of glutamate into the blood. Involved in renal secretion and possible reabsorption of creatinine. Able to uptake prostaglandin E2 (PGE2) and may contribute to PGE2 renal excretion. Also transports alpha-ketoglutarate and urate. Unlike human hortolog, able to transport glutarate. Apart from the orotate/glutamate exchange, the counterions for the uptake of other SLC22A7/OAT2 substrates remain to be identified. The chain is Solute carrier family 22 member 7 from Mus musculus (Mouse).